The following is a 459-amino-acid chain: Putrescine aminotransferase (459 aa).

Pyridoxal 5'-phosphate-binding positions include 150 to 151 (GT) and glutamine 274. The residue at position 300 (lysine 300) is an N6-(pyridoxal phosphate)lysine. Threonine 332 is a pyridoxal 5'-phosphate binding site.

Belongs to the class-III pyridoxal-phosphate-dependent aminotransferase family. Putrescine aminotransferase subfamily. The cofactor is pyridoxal 5'-phosphate.

It carries out the reaction an alkane-alpha,omega-diamine + 2-oxoglutarate = an omega-aminoaldehyde + L-glutamate. The enzyme catalyses putrescine + 2-oxoglutarate = 1-pyrroline + L-glutamate + H2O. It catalyses the reaction cadaverine + 2-oxoglutarate = 5-aminopentanal + L-glutamate. It participates in amine and polyamine degradation; putrescine degradation; 4-aminobutanal from putrescine (transaminase route): step 1/1. Catalyzes the aminotransferase reaction from putrescine to 2-oxoglutarate, leading to glutamate and 4-aminobutanal, which spontaneously cyclizes to form 1-pyrroline. This is the first step in one of two pathways for putrescine degradation, where putrescine is converted into 4-aminobutanoate (gamma-aminobutyrate or GABA) via 4-aminobutanal. Also functions as a cadaverine transaminase in a a L-lysine degradation pathway to succinate that proceeds via cadaverine, glutarate and L-2-hydroxyglutarate. The sequence is that of Putrescine aminotransferase from Klebsiella pneumoniae subsp. pneumoniae (strain ATCC 700721 / MGH 78578).